The chain runs to 385 residues: 2-oxoglutarate-dependent dioxygenase AFUA_1G01000 (385 aa).

One can recognise a Fe2OG dioxygenase domain in the interval 203–327 (PSDDFLRLLR…RYSVLVGTRP (125 aa)). The Fe cation site is built by His230, Asp232, and His304. 2-oxoglutarate is bound at residue Arg318.

It belongs to the iron/ascorbate-dependent oxidoreductase family. Fe(2+) is required as a cofactor.

Its function is as follows. 2-oxoglutarate-dependent dioxygenase; part of the gene cluster that mediates the biosynthesis of fumigermin that inhibits germination of spores of the inducing S.rapamycinicus, and thus helps the fungus to defend resources in the shared habitat against a bacterial competitor. The partially reducing polyketide synthase fngA alone is sufficient for the production of fumigermin. FgnA catalyzes the condensation of 3 malonyl-CoA units to an acetyl-CoA starter, and 3 methylations to yield fumigermin. It is remarkable that the five cluster genes including fgnA are conserved in distantly related fungi, supporting the assumption of a fumigermin cluster; it is thus possible that originally all five genes were functional, but that the genes encoding tailoring enzymes became inactive from mutations, similar to the case of the fgnA gene in strains A1163 and Af293. This chain is 2-oxoglutarate-dependent dioxygenase AFUA_1G01000, found in Aspergillus fumigatus (strain ATCC MYA-4609 / CBS 101355 / FGSC A1100 / Af293) (Neosartorya fumigata).